A 105-amino-acid polypeptide reads, in one-letter code: Flower-specific defensin (105 aa).

Residues 1–25 form the signal peptide; it reads MARSLCFMAFAILAMMLFVAYEVQA. Intrachain disulfides connect C28–C72, C39–C59, C45–C66, and C49–C68. A propeptide spans 73-105 (removed in mature form); that stretch reads VFDEKMTKTGAEILAEEAKTLAAALLEEEIMDN.

Belongs to the DEFL family. Most abundant in the epidermal cell layers of the petals and sepals, within the connective cells of the anthers, and the cortical cells of the style. Not detected in the tapetum, pollen mother cells, the transmitting tissue, the vascular bundles of the anther and style or in leaves. Expressed also in ovaries, but barley detectable in roots.

Its subcellular location is the secreted. It localises to the vacuole. Functionally, plant defense peptide with antifungal activity against F.oxysporum and B.cinerea. Retards the growth of the Lepidopteran insect pests H.armigera and H.punctigera. This chain is Flower-specific defensin (D1), found in Nicotiana alata (Winged tobacco).